The chain runs to 371 residues: Histidinol-phosphate aminotransferase (371 aa).

At K227 the chain carries N6-(pyridoxal phosphate)lysine.

It belongs to the class-II pyridoxal-phosphate-dependent aminotransferase family. Histidinol-phosphate aminotransferase subfamily. In terms of assembly, homodimer. Pyridoxal 5'-phosphate is required as a cofactor.

The catalysed reaction is L-histidinol phosphate + 2-oxoglutarate = 3-(imidazol-4-yl)-2-oxopropyl phosphate + L-glutamate. Its pathway is amino-acid biosynthesis; L-histidine biosynthesis; L-histidine from 5-phospho-alpha-D-ribose 1-diphosphate: step 7/9. The polypeptide is Histidinol-phosphate aminotransferase (Sphingopyxis alaskensis (strain DSM 13593 / LMG 18877 / RB2256) (Sphingomonas alaskensis)).